A 68-amino-acid chain; its full sequence is UPF0434 protein BMA10229_A1047 (68 aa).

It belongs to the UPF0434 family.

The protein is UPF0434 protein BMA10229_A1047 of Burkholderia mallei (strain NCTC 10229).